Consider the following 77-residue polypeptide: MKLTCVLIVAVLILTACQLIAADDSRDLKRFSRRKMRDGMLNTKNMKRQCLPPLSLCTMDDDECCDDCXLFLCLVTS.

The signal sequence occupies residues 1–22; sequence MKLTCVLIVAVLILTACQLIAA. The propeptide occupies 23–46; that stretch reads DDSRDLKRFSRRKMRDGMLNTKNM. Glutamine 49 is subject to Pyrrolidone carboxylic acid. 3 cysteine pairs are disulfide-bonded: cysteine 50–cysteine 65, cysteine 57–cysteine 68, and cysteine 64–cysteine 73.

The protein belongs to the conotoxin O1 superfamily. Expressed by the venom duct.

The protein localises to the secreted. The sequence is that of Conotoxin ArMKLT2-0251 from Conus arenatus (Sand-dusted cone).